The following is a 138-amino-acid chain: Low molecular weight protein-tyrosine-phosphatase PtpB (138 aa).

Cys7 serves as the catalytic Nucleophile. Arg13 is an active-site residue. Asp111 acts as the Proton donor in catalysis.

This sequence belongs to the low molecular weight phosphotyrosine protein phosphatase family.

It carries out the reaction O-phospho-L-tyrosyl-[protein] + H2O = L-tyrosyl-[protein] + phosphate. Its function is as follows. Dephosphorylates the phosphotyrosine-containing proteins. The sequence is that of Low molecular weight protein-tyrosine-phosphatase PtpB (ptpB) from Staphylococcus haemolyticus (strain JCSC1435).